Here is a 445-residue protein sequence, read N- to C-terminus: MKKTGSFAEFHVNMIERVMVRPCLPSPKTILPLSAIDNMARAFSNVLLVYAANMDRVSADPAKVIREALSKVLVYYYPFAGRLRNKENGELEVECTGQGVLFLEAMADSDLSVLTDLDNYNPSFQQLIFSLPQDTDIEDLHLLIVQVTRFTCGGFVVGANVYGSACDAKGFGQFLQSMAEMARGEVKPSIEPIWNRELVKLEHCMPFRMSHLQIIHAPVIEEKFVQTSLVINFEIINHIRRRIMEERKESLSSFEIVAALVWLAKIKAFQIPHSENVKLLFAMDLRRSFNPPLPHGYYGNAFGIACAMDNVHDLLSGSLLRTIMIIKKSKFSLHKELNSKTVMSSSVVDVNTKFEDVVSISDWRHSIYYEVDFGWGDAMNVSTMLQQQEHEKSLPTYFSFLQSTKNMPDGIKMLMFMPPSKLKKFKIEIEAMIKKYVTKVCPSKL.

This sequence belongs to the plant acyltransferase family.

The enzyme catalyses (3R)-3-amino-3-phenylpropanoyl-CoA + baccatin III = 3'-N-debenzoyl-2'-deoxytaxol + CoA. Its pathway is alkaloid biosynthesis; taxol biosynthesis. Functionally, acyltransferase involved in taxol biosynthesis. Catalyzes the selective 13-O-acylation of baccatin III with (3R)-3-amino-3-phenylpropanoyl-CoA as the acyl donor to form 3'-N-debenzoyl-2'-deoxytaxol. The sequence is that of Baccatin III:3-amino-3-phenylpropanoyltransferase from Taxus cuspidata (Japanese yew).